A 101-amino-acid polypeptide reads, in one-letter code: Large ribosomal subunit protein bL28 (101 aa).

The protein belongs to the bacterial ribosomal protein bL28 family.

This Rhodopseudomonas palustris (strain BisA53) protein is Large ribosomal subunit protein bL28.